The sequence spans 103 residues: MTQPDMSQILAQAQQMQAQLQAAQQEILATTVVGNAGNGLVTVTMAGNGEVSAVTVDPKVVDPEDVETLQDLLLGAFKDAHNKVANVAEEKMGPLSQGMGGLF.

It belongs to the YbaB/EbfC family. As to quaternary structure, homodimer.

It localises to the cytoplasm. It is found in the nucleoid. Functionally, binds to DNA and alters its conformation. May be involved in regulation of gene expression, nucleoid organization and DNA protection. The sequence is that of Nucleoid-associated protein Cgl0243/cg0297 from Corynebacterium glutamicum (strain ATCC 13032 / DSM 20300 / JCM 1318 / BCRC 11384 / CCUG 27702 / LMG 3730 / NBRC 12168 / NCIMB 10025 / NRRL B-2784 / 534).